The following is a 453-amino-acid chain: Homogentisate 1,2-dioxygenase (453 aa).

H304 (proton acceptor) is an active-site residue. Positions 347 and 353 each coordinate Fe cation. The homogentisate site is built by Y362 and H383. H383 contacts Fe cation.

This sequence belongs to the homogentisate dioxygenase family. Hexamer; dimer of trimers. Fe cation is required as a cofactor.

The catalysed reaction is homogentisate + O2 = 4-maleylacetoacetate + H(+). Its pathway is amino-acid degradation; L-phenylalanine degradation; acetoacetate and fumarate from L-phenylalanine: step 4/6. Its function is as follows. Involved in the catabolism of homogentisate (2,5-dihydroxyphenylacetate or 2,5-OH-PhAc), a central intermediate in the degradation of phenylalanine and tyrosine. Catalyzes the oxidative ring cleavage of the aromatic ring of homogentisate to yield maleylacetoacetate. This Sinorhizobium fredii (strain NBRC 101917 / NGR234) protein is Homogentisate 1,2-dioxygenase.